A 95-amino-acid polypeptide reads, in one-letter code: Co-chaperonin GroES (95 aa).

Belongs to the GroES chaperonin family. In terms of assembly, heptamer of 7 subunits arranged in a ring. Interacts with the chaperonin GroEL.

It is found in the cytoplasm. Functionally, together with the chaperonin GroEL, plays an essential role in assisting protein folding. The GroEL-GroES system forms a nano-cage that allows encapsulation of the non-native substrate proteins and provides a physical environment optimized to promote and accelerate protein folding. GroES binds to the apical surface of the GroEL ring, thereby capping the opening of the GroEL channel. This is Co-chaperonin GroES from Maricaulis maris (strain MCS10) (Caulobacter maris).